Consider the following 674-residue polypeptide: tRNA 5-methylaminomethyl-2-thiouridine biosynthesis bifunctional protein MnmC (674 aa).

The tRNA (mnm(5)s(2)U34)-methyltransferase stretch occupies residues 1–246 (MFIMSSISHA…KREMIAGSLS (246 aa)). Positions 272 to 674 (IGGGIASATL…RKGKALTQKV (403 aa)) are FAD-dependent cmnm(5)s(2)U34 oxidoreductase.

This sequence in the N-terminal section; belongs to the methyltransferase superfamily. tRNA (mnm(5)s(2)U34)-methyltransferase family. It in the C-terminal section; belongs to the DAO family. FAD serves as cofactor.

The protein resides in the cytoplasm. It carries out the reaction 5-aminomethyl-2-thiouridine(34) in tRNA + S-adenosyl-L-methionine = 5-methylaminomethyl-2-thiouridine(34) in tRNA + S-adenosyl-L-homocysteine + H(+). In terms of biological role, catalyzes the last two steps in the biosynthesis of 5-methylaminomethyl-2-thiouridine (mnm(5)s(2)U) at the wobble position (U34) in tRNA. Catalyzes the FAD-dependent demodification of cmnm(5)s(2)U34 to nm(5)s(2)U34, followed by the transfer of a methyl group from S-adenosyl-L-methionine to nm(5)s(2)U34, to form mnm(5)s(2)U34. In Vibrio cholerae serotype O1 (strain ATCC 39315 / El Tor Inaba N16961), this protein is tRNA 5-methylaminomethyl-2-thiouridine biosynthesis bifunctional protein MnmC.